The chain runs to 422 residues: Glutamate-1-semialdehyde 2,1-aminomutase (422 aa).

Lysine 264 carries the post-translational modification N6-(pyridoxal phosphate)lysine.

The protein belongs to the class-III pyridoxal-phosphate-dependent aminotransferase family. HemL subfamily. As to quaternary structure, homodimer. Requires pyridoxal 5'-phosphate as cofactor.

It localises to the cytoplasm. It catalyses the reaction (S)-4-amino-5-oxopentanoate = 5-aminolevulinate. It participates in porphyrin-containing compound metabolism; protoporphyrin-IX biosynthesis; 5-aminolevulinate from L-glutamyl-tRNA(Glu): step 2/2. This chain is Glutamate-1-semialdehyde 2,1-aminomutase, found in Clostridium kluyveri (strain ATCC 8527 / DSM 555 / NBRC 12016 / NCIMB 10680 / K1).